A 289-amino-acid chain; its full sequence is Thymidylate synthase (289 aa).

Residues Arg-21 and 150-151 each bind dUMP; that span reads RR. Cys-170 functions as the Nucleophile in the catalytic mechanism. Residues 191–194, Asn-202, and 232–234 contribute to the dUMP site; these read RSGD and HIY. Asp-194 provides a ligand contact to (6R)-5,10-methylene-5,6,7,8-tetrahydrofolate. (6R)-5,10-methylene-5,6,7,8-tetrahydrofolate is bound at residue Ala-288.

It belongs to the thymidylate synthase family. Bacterial-type ThyA subfamily. In terms of assembly, homodimer.

It is found in the cytoplasm. The enzyme catalyses dUMP + (6R)-5,10-methylene-5,6,7,8-tetrahydrofolate = 7,8-dihydrofolate + dTMP. The protein operates within pyrimidine metabolism; dTTP biosynthesis. Catalyzes the reductive methylation of 2'-deoxyuridine-5'-monophosphate (dUMP) to 2'-deoxythymidine-5'-monophosphate (dTMP) while utilizing 5,10-methylenetetrahydrofolate (mTHF) as the methyl donor and reductant in the reaction, yielding dihydrofolate (DHF) as a by-product. This enzymatic reaction provides an intracellular de novo source of dTMP, an essential precursor for DNA biosynthesis. The polypeptide is Thymidylate synthase (Mycoplasmopsis synoviae (strain 53) (Mycoplasma synoviae)).